The following is a 418-amino-acid chain: Histidine--tRNA ligase (418 aa).

The protein belongs to the class-II aminoacyl-tRNA synthetase family. In terms of assembly, homodimer.

It localises to the cytoplasm. It catalyses the reaction tRNA(His) + L-histidine + ATP = L-histidyl-tRNA(His) + AMP + diphosphate + H(+). The sequence is that of Histidine--tRNA ligase from Thermosipho africanus (strain TCF52B).